We begin with the raw amino-acid sequence, 277 residues long: Large ribosomal subunit protein uL2 (277 aa).

The disordered stretch occupies residues 219–277; the sequence is TVRGSVMNPNDHPHGGGEGKAPVGRKAPSTPWGKPALGLKTRNKKAKSDKLIVRRRNEK. Over residues 264–277 the composition is skewed to basic and acidic residues; that stretch reads AKSDKLIVRRRNEK.

It belongs to the universal ribosomal protein uL2 family. Part of the 50S ribosomal subunit. Forms a bridge to the 30S subunit in the 70S ribosome.

In terms of biological role, one of the primary rRNA binding proteins. Required for association of the 30S and 50S subunits to form the 70S ribosome, for tRNA binding and peptide bond formation. It has been suggested to have peptidyltransferase activity; this is somewhat controversial. Makes several contacts with the 16S rRNA in the 70S ribosome. In Streptococcus sanguinis (strain SK36), this protein is Large ribosomal subunit protein uL2.